The following is a 90-amino-acid chain: Small ribosomal subunit protein uS15 (90 aa).

The protein belongs to the universal ribosomal protein uS15 family. In terms of assembly, part of the 30S ribosomal subunit. Forms a bridge to the 50S subunit in the 70S ribosome, contacting the 23S rRNA.

In terms of biological role, one of the primary rRNA binding proteins, it binds directly to 16S rRNA where it helps nucleate assembly of the platform of the 30S subunit by binding and bridging several RNA helices of the 16S rRNA. Forms an intersubunit bridge (bridge B4) with the 23S rRNA of the 50S subunit in the ribosome. The sequence is that of Small ribosomal subunit protein uS15 from Campylobacter fetus subsp. fetus (strain 82-40).